The primary structure comprises 750 residues: MTIRSPEPEVKILVERDPVKTSLEKWAQPGHFSRTLAKGPNTTTWIWNLHADSHDFDSHTNDLEEISRKVFSAHFGQLAIIFVWLSGMYFHGARFSNYEAWLSDPIHIKPSAQVVWPIVGQEILNGDVGGGFQGIQITSGFFQIWRASGITSELQLYCTAIGALIFATLMLFAGWFHYHKAAPKLAWFQDVESMLNHHLAGLLGLGSLAWAGHQVHVSLPINQLLDAGVDPKEIPLPHEFILNRDLLAQLYPSFAKGLIPFFTLNWSEYSDFLTFRGGLNPVTGGLWLTDTVHHHLAIAVLFLVAGHMYRTNWSIGHSIKEILEAHEGPFTGEGHKGIFEILTTSWHAQLALNLAMLGSLTIIVAHHMYSMPPYPYLAIDYGTQLSLFTHHMWIGGFLVVGAAAHAAIFMVRDYDPTTQYNNLLDRVLRHRDAIISHLNWVCIFLGFHSFGLYIHNDTMSALGRPQDMFSDTAIQLQPIFAQWVQNTHASAPGLTAPNAIASTSLTWGGDNLIAVGGKVALLPIPLGTADFLVHHIHAFTIHVTVLILLKGVLFARSSRLIPDKANLGFRFPCDGPGRGGTCQVSAWDHVFLGLFWMYNSISIVIFHFSWKMQSDVWGSINDQGVINHITGGNFAQSSTTINGWLRDFLWAQASQVIQSYGSSLSAYGLLFLGAHFVWAFSLMFLFSGRGYWQELIESIIWAHNKLKVAPAIQPRALSIVQGRAVGVAHYLLGGIATTWAFFLARIIAVG.

8 consecutive transmembrane segments (helical) span residues 70–93 (VFSAHFGQLAIIFVWLSGMYFHGA), 156–179 (LYCTAIGALIFATLMLFAGWFHYH), 195–219 (LNHHLAGLLGLGSLAWAGHQVHVSL), 291–309 (TVHHHLAIAVLFLVAGHMY), 346–369 (WHAQLALNLAMLGSLTIIVAHHMY), 385–411 (LSLFTHHMWIGGFLVVGAAAHAAIFMV), 433–455 (AIISHLNWVCIFLGFHSFGLYIH), and 531–549 (FLVHHIHAFTIHVTVLILL). Residues Cys-573 and Cys-582 each coordinate [4Fe-4S] cluster. 2 helical membrane-spanning segments follow: residues 589-610 (HVFLGLFWMYNSISIVIFHFSW) and 664-686 (LSAYGLLFLGAHFVWAFSLMFLF). A chlorophyll a'-binding site is contributed by His-675. Chlorophyll a is bound by residues Met-683 and Tyr-691. Trp-692 contacts phylloquinone. The helical transmembrane segment at 724–744 (AVGVAHYLLGGIATTWAFFLA) threads the bilayer.

It belongs to the PsaA/PsaB family. As to quaternary structure, the PsaA/B heterodimer binds the P700 chlorophyll special pair and subsequent electron acceptors. PSI consists of a core antenna complex that captures photons, and an electron transfer chain that converts photonic excitation into a charge separation. The eukaryotic PSI reaction center is composed of at least 11 subunits. P700 is a chlorophyll a/chlorophyll a' dimer, A0 is one or more chlorophyll a, A1 is one or both phylloquinones and FX is a shared 4Fe-4S iron-sulfur center. serves as cofactor.

The protein localises to the plastid. It is found in the chloroplast thylakoid membrane. The catalysed reaction is reduced [plastocyanin] + hnu + oxidized [2Fe-2S]-[ferredoxin] = oxidized [plastocyanin] + reduced [2Fe-2S]-[ferredoxin]. Functionally, psaA and PsaB bind P700, the primary electron donor of photosystem I (PSI), as well as the electron acceptors A0, A1 and FX. PSI is a plastocyanin-ferredoxin oxidoreductase, converting photonic excitation into a charge separation, which transfers an electron from the donor P700 chlorophyll pair to the spectroscopically characterized acceptors A0, A1, FX, FA and FB in turn. Oxidized P700 is reduced on the lumenal side of the thylakoid membrane by plastocyanin. The polypeptide is Photosystem I P700 chlorophyll a apoprotein A1 (Psilotum nudum (Whisk fern)).